Reading from the N-terminus, the 510-residue chain is D-allose import ATP-binding protein AlsA (510 aa).

ABC transporter domains follow at residues 6-245 (ISMA…VGRE) and 260-509 (LAHE…ALPQ). 38 to 45 (GENGAGKS) serves as a coordination point for ATP.

It belongs to the ABC transporter superfamily. D-allose importer (TC 3.A.1.2.6) family. The complex is composed of two ATP-binding proteins (AlsA), two transmembrane proteins (AlsC) and a solute-binding protein (AlsB).

Its subcellular location is the cell inner membrane. It carries out the reaction D-allose(out) + ATP + H2O = D-allose(in) + ADP + phosphate + H(+). Part of the ABC transporter complex AlsBAC involved in D-allose import. Probably responsible for energy coupling to the transport system. This chain is D-allose import ATP-binding protein AlsA (alsA), found in Escherichia coli (strain K12).